Here is a 375-residue protein sequence, read N- to C-terminus: 23S rRNA (uracil(747)-C(5))-methyltransferase RlmC (375 aa).

[4Fe-4S] cluster is bound by residues Cys3, Cys11, Cys14, and Cys87. S-adenosyl-L-methionine-binding residues include Gln212, Phe241, Glu262, and Asn307. Catalysis depends on Cys334, which acts as the Nucleophile.

It belongs to the class I-like SAM-binding methyltransferase superfamily. RNA M5U methyltransferase family. RlmC subfamily.

The catalysed reaction is uridine(747) in 23S rRNA + S-adenosyl-L-methionine = 5-methyluridine(747) in 23S rRNA + S-adenosyl-L-homocysteine + H(+). Its function is as follows. Catalyzes the formation of 5-methyl-uridine at position 747 (m5U747) in 23S rRNA. This is 23S rRNA (uracil(747)-C(5))-methyltransferase RlmC from Salmonella enteritidis PT4 (strain P125109).